An 807-amino-acid polypeptide reads, in one-letter code: FAD-linked oxidoreductase pytB (807 aa).

Positions Met-1–Ala-18 are cleaved as a signal peptide. N-linked (GlcNAc...) asparagine glycosylation is found at Asn-45, Asn-106, Asn-120, Asn-242, Asn-295, Asn-351, Asn-419, and Asn-699. Residues Phe-60–Ile-231 form the FAD-binding PCMH-type domain.

The protein belongs to the oxygen-dependent FAD-linked oxidoreductase family. FAD serves as cofactor.

The protein operates within secondary metabolite biosynthesis. In terms of biological role, FAD-linked oxidoreductase; part of the gene cluster that mediates the biosynthesis of pyranterreones, a family of antioxidative compounds. The first step of pyranonigrins biosynthesis is performed by the hybrid PKS-NRPS synthetase pytA that condenses 4 malonyl-CoA units ato the acetyl starter unit by the modular PKS of pytA. The acyl chain is then connected to an L-serine through the amide bond by the modular NRPS of pytA. A tetramic acid is formed and released from the PKS-NRPS pytA to give pyranterreone 5 with the help of the thioesterase pytI. Pyranterreone 5 could be methylated by pytC to afford pyranterreone 6. Both pyranterreones 5 and 6 are subsequently oxidized by the FAD-linked oxidoreductase pytB and the cytochrome P450 monooxygenase pytD to form the fused gamma-pyrone core, resulting in pyranterreones 7 and 11, respectively. The hydroxy group at C-8 of pyranterreones 7 and 11 are dehydrated by the aspartyl protease pytH to form a delta-7 double bond to give pyranterreones 3 and 1, 2 accordingly. The exo-methylene of pyranterreone 3 could be reduced into a pendant methyl by reductase pytE to provide pyranterreone 4, also known as cordylactam. Pyranterreone 4 can be reconverted to pyranterreone 3 through pytB-catalyzed dehydrogenation or further oxidized to pyranterreones 9 and 10. The protein is FAD-linked oxidoreductase pytB of Aspergillus terreus (strain NIH 2624 / FGSC A1156).